The primary structure comprises 309 residues: uncharacterized protein (309 aa).

Residues 1-16 are compositionally biased toward basic residues; it reads MAGNSRRRGAVRKAGT. The disordered stretch occupies residues 1-70; that stretch reads MAGNSRRRGA…AKRTEETETV (70 aa). Positions 261, 281, and 290 each coordinate S-adenosyl-L-methionine.

The protein belongs to the class IV-like SAM-binding methyltransferase superfamily. RNA methyltransferase TrmH family.

This is an uncharacterized protein from Mycobacterium avium (strain 104).